A 153-amino-acid polypeptide reads, in one-letter code: Putative pre-16S rRNA nuclease (153 aa).

Belongs to the YqgF nuclease family.

The protein localises to the cytoplasm. Its function is as follows. Could be a nuclease involved in processing of the 5'-end of pre-16S rRNA. This chain is Putative pre-16S rRNA nuclease, found in Prochlorococcus marinus (strain MIT 9301).